The primary structure comprises 263 residues: Ribonuclease HII (263 aa).

Residues 71–262 enclose the RNase H type-2 domain; it reads QAIAGIDEVG…VKSMCCDSTN (192 aa). Residues Asp-77, Glu-78, and Asp-172 each contribute to the a divalent metal cation site.

Belongs to the RNase HII family. Requires Mn(2+) as cofactor. Mg(2+) is required as a cofactor.

The protein resides in the cytoplasm. The catalysed reaction is Endonucleolytic cleavage to 5'-phosphomonoester.. Its function is as follows. Endonuclease that specifically degrades the RNA of RNA-DNA hybrids. In Streptococcus pyogenes serotype M12 (strain MGAS2096), this protein is Ribonuclease HII.